Here is a 665-residue protein sequence, read N- to C-terminus: Fructose-1,6-bisphosphatase class 3 (665 aa).

It belongs to the FBPase class 3 family. The cofactor is Mn(2+).

The catalysed reaction is beta-D-fructose 1,6-bisphosphate + H2O = beta-D-fructose 6-phosphate + phosphate. The protein operates within carbohydrate biosynthesis; gluconeogenesis. In Clostridium novyi (strain NT), this protein is Fructose-1,6-bisphosphatase class 3.